The sequence spans 434 residues: Nicotinate phosphoribosyltransferase (434 aa).

His-242 is modified (phosphohistidine; by autocatalysis).

It belongs to the NAPRTase family. Post-translationally, transiently phosphorylated on a His residue during the reaction cycle. Phosphorylation strongly increases the affinity for substrates and increases the rate of nicotinate D-ribonucleotide production. Dephosphorylation regenerates the low-affinity form of the enzyme, leading to product release.

It carries out the reaction nicotinate + 5-phospho-alpha-D-ribose 1-diphosphate + ATP + H2O = nicotinate beta-D-ribonucleotide + ADP + phosphate + diphosphate. It participates in cofactor biosynthesis; NAD(+) biosynthesis; nicotinate D-ribonucleotide from nicotinate: step 1/1. Catalyzes the synthesis of beta-nicotinate D-ribonucleotide from nicotinate and 5-phospho-D-ribose 1-phosphate at the expense of ATP. The protein is Nicotinate phosphoribosyltransferase of Nitrobacter hamburgensis (strain DSM 10229 / NCIMB 13809 / X14).